A 95-amino-acid chain; its full sequence is Small ribosomal subunit protein bS6 (95 aa).

This sequence belongs to the bacterial ribosomal protein bS6 family.

Binds together with bS18 to 16S ribosomal RNA. This is Small ribosomal subunit protein bS6 from Corynebacterium efficiens (strain DSM 44549 / YS-314 / AJ 12310 / JCM 11189 / NBRC 100395).